Reading from the N-terminus, the 314-residue chain is MNQKPTAIFLMGPTASGKTDLAIQLRQELPVEVISVDSALIYKGMDIGTAKPSKEELALAPHRLIDIIDPAESYSAANFRSDALREMADITEQGRIPLLVGGTMLYYKALLEGLSPLPQADEKVRSKIEEKAQKFGWATLHKELSLIDPVSAARINPNDSQRINRALEVFYISGKSMTELTEQKGEQLPYHILQFAIAPEDRAILHRRIEMRFHKMIESGFKQEVERLYHRGDLHIDLPSIRCVGYRQMWEHLRGDYDLDEAVFRGICATRQLAKRQITWLRGWKYPIQWLDSLKNSENKEIIKRAFDLTMQNG.

12–19 (GPTASGKT) is a binding site for ATP. 14-19 (TASGKT) provides a ligand contact to substrate. Interaction with substrate tRNA regions lie at residues 37–40 (DSAL), 161–165 (QRINR), 242–247 (RCVGYR), and 275–282 (KRQITWLR).

Belongs to the IPP transferase family. Monomer. Requires Mg(2+) as cofactor.

It catalyses the reaction adenosine(37) in tRNA + dimethylallyl diphosphate = N(6)-dimethylallyladenosine(37) in tRNA + diphosphate. Functionally, catalyzes the transfer of a dimethylallyl group onto the adenine at position 37 in tRNAs that read codons beginning with uridine, leading to the formation of N6-(dimethylallyl)adenosine (i(6)A). This is tRNA dimethylallyltransferase from Mannheimia succiniciproducens (strain KCTC 0769BP / MBEL55E).